The chain runs to 1456 residues: CLIP-associating protein 1-B (1456 aa).

HEAT repeat units lie at residues 68 to 87 (LLGM…RFRT), 88 to 124 (QIGT…QASN), and 163 to 200 (LTLS…HVGE). Positions 237–296 (TDKNFDDEDSVDGNRPSSASSSASSKAPQTARRGVSLGTGRRPGTSSAAPKTGGTAKEGA) are disordered. Low complexity predominate over residues 284–296 (AAPKTGGTAKEGA). One copy of the HEAT 4 repeat lies at 442–479 (THVPRLIPIITSNCTSKSVAVRRRCYEFLDLLLQEWQT). Disordered regions lie at residues 547–728 (SIVS…DRFG) and 776–796 (GMYS…ERSY). Low complexity predominate over residues 550 to 569 (SLPQSDRSSSSSQESLNRPL). Residues 573–594 (RSPTGSTVSRATSKSTTGSLQR) show a composition bias toward polar residues. Low complexity-rich tracts occupy residues 603–618 (AAAT…ASTA), 642–656 (QSSG…TPAD), and 665–679 (VVSQ…SSPG). The segment covering 711-721 (QGCSRETSPSR) has biased composition (polar residues). A compositionally biased stretch (low complexity) spans 785–796 (SDASSACSERSY). An HEAT 5 repeat occupies 930 to 967 (QQFNILMRFIVDQTQTPNLKVKVAILKYIESLARQMDP). 2 disordered regions span residues 1037-1080 (LKNS…GLSP) and 1121-1147 (VRRD…DLRG). Residues 1038-1050 (KNSSNSSMGSPSN) show a composition bias toward low complexity. Polar residues predominate over residues 1062 to 1074 (SRASPLTSPTNCS). The segment covering 1121 to 1130 (VRRDGKKESE) has biased composition (basic and acidic residues). HEAT repeat units follow at residues 1260 to 1297 (EHFK…NQPA) and 1378 to 1415 (QILP…VIGE).

The protein belongs to the CLASP family. In terms of assembly, interacts (via C-terminus) with clip1/clip-170, and cenpe.

The protein resides in the cytoplasm. The protein localises to the cytoskeleton. It localises to the microtubule organizing center. It is found in the centrosome. Its subcellular location is the chromosome. The protein resides in the centromere. The protein localises to the kinetochore. It localises to the spindle. It is found in the golgi apparatus. Its subcellular location is the trans-Golgi network. Microtubule plus-end tracking protein that promotes the stabilization of dynamic microtubules during anaphase. Plays a crucial role in chromatin-induced microtubule formation. May also act at microtubule minus ends. May be involved in the nucleation of noncentrosomal microtubules originating from the trans-Golgi network (TGN). The protein is CLIP-associating protein 1-B of Xenopus laevis (African clawed frog).